A 157-amino-acid chain; its full sequence is Protein-export protein SecB (157 aa).

The protein belongs to the SecB family. In terms of assembly, homotetramer, a dimer of dimers. One homotetramer interacts with 1 SecA dimer.

Its subcellular location is the cytoplasm. Its function is as follows. One of the proteins required for the normal export of preproteins out of the cell cytoplasm. It is a molecular chaperone that binds to a subset of precursor proteins, maintaining them in a translocation-competent state. It also specifically binds to its receptor SecA. The sequence is that of Protein-export protein SecB from Rhodopseudomonas palustris (strain TIE-1).